A 912-amino-acid chain; its full sequence is MINSLLTRVFGSRNERQLRQLNRLVTQINALEPTIEKLSDAELQAKTPEFKQRLAAGESLDKILPEAFAVCREASRRVLGMRHYDVQLIGGMVLHLGKIAEMRTGEGKTLVATLPVYLNALEGQGVHVVTVNDYLARRDAAQMGKLYNWLGLSVGVVYPGMPHSDKHAAYAADITYGTNNEFGFDYLRDNMALSRADRYQRKLHYAIVDEVDSILIDEARTPLIISGPADESPELYIRVNRIVPQLTKQESEEGEGDYWIDEKGKQVHLSEAGMGHAEELLLQAGILENADDGLYAAQNLSVVHHLNAALRAHAIYQRDVDYIVRDGEVVIVDEFTGRTLSGRRWSDGLHQAVEAKEGVPVQRENQTLASITFQNLFRMYKKLSGMTGTADTEAYEFQSIYGLEVVVIPTNRPTVRKDHPDQVFLNRKGKFNAVLADIEDCAKRGQPVLVGTTSIETSEMLSEHLRKAGVKHEVLNAKQHEREATIVANAGQPGAVTIATNMAGRGTDIVLGGSLEAEYHVLGEDATEEARFKIKTDWQRRHDAVKAAGGLHIIGTERHESRRIDNQLRGRAGRQGDPGSSRFYLSLEDNLMRIFASDWVQKAMRMMGMKEDDVIEDRLVSRQIEKAQRKVEAHNFDIRKNLLDFDDVNNDQRKVIYAQRDDLLDAESVKDNVDGIRGDVIYDLVARFVPPNSVDEQWDLQGLEATLESELGMPLALRELAKTQEELDAEQIAAKVQTAVDAHFAEKEAAVGADTMRALEKHVMLTVLDQGWKEHLAKMDYLRQGIYLRGYAQKQPKQEYKKEAFELFSEMLENVKREVINLLARVRIRSEEEVAELEEQERRQAEARLLASQFQHQDAGGYGADEEVEQMQGGNAPVPVSQVTRDEPKVGRNDPCPCGSGKKYKHCHGQLS.

Residues Q87, 105 to 109 (GEGKT), and D508 contribute to the ATP site. Residues 855–912 (QHQDAGGYGADEEVEQMQGGNAPVPVSQVTRDEPKVGRNDPCPCGSGKKYKHCHGQLS) are disordered. Zn(2+) is bound by residues C896, C898, C907, and H908. The segment covering 902–912 (KKYKHCHGQLS) has biased composition (basic residues).

It belongs to the SecA family. In terms of assembly, monomer and homodimer. Part of the essential Sec protein translocation apparatus which comprises SecA, SecYEG and auxiliary proteins SecDF-YajC and YidC. It depends on Zn(2+) as a cofactor.

It localises to the cell inner membrane. The protein resides in the cytoplasm. It carries out the reaction ATP + H2O + cellular proteinSide 1 = ADP + phosphate + cellular proteinSide 2.. Its function is as follows. Part of the Sec protein translocase complex. Interacts with the SecYEG preprotein conducting channel. Has a central role in coupling the hydrolysis of ATP to the transfer of proteins into and across the cell membrane, serving both as a receptor for the preprotein-SecB complex and as an ATP-driven molecular motor driving the stepwise translocation of polypeptide chains across the membrane. The chain is Protein translocase subunit SecA from Xanthomonas campestris pv. campestris (strain 8004).